The chain runs to 530 residues: Phosphoenolpyruvate carboxykinase (ATP) (530 aa).

The substrate site is built by Arg-56, Tyr-196, and Lys-202. Residues Lys-202, His-221, and 237-245 (GLSGTGKTT) contribute to the ATP site. Mn(2+) contacts are provided by Lys-202 and His-221. Asp-258 provides a ligand contact to Mn(2+). Residues Glu-286, Arg-322, 438-439 (RI), and Thr-444 contribute to the ATP site. Arg-322 serves as a coordination point for substrate.

The protein belongs to the phosphoenolpyruvate carboxykinase (ATP) family. As to quaternary structure, monomer. The cofactor is Mn(2+).

It is found in the cytoplasm. The enzyme catalyses oxaloacetate + ATP = phosphoenolpyruvate + ADP + CO2. Its pathway is carbohydrate biosynthesis; gluconeogenesis. Its function is as follows. Involved in the gluconeogenesis. Catalyzes the conversion of oxaloacetate (OAA) to phosphoenolpyruvate (PEP) through direct phosphoryl transfer between the nucleoside triphosphate and OAA. In Photobacterium profundum (strain SS9), this protein is Phosphoenolpyruvate carboxykinase (ATP).